The following is a 268-amino-acid chain: Aliphatic sulfonates import ATP-binding protein SsuB (268 aa).

The ABC transporter domain maps to 15-236; sequence LAVRNLQKTF…VRGSHRLAAL (222 aa). Residue 47–54 participates in ATP binding; that stretch reads GRSGCGKS.

The protein belongs to the ABC transporter superfamily. Aliphatic sulfonates importer (TC 3.A.1.17.2) family. The complex is composed of two ATP-binding proteins (SsuB), two transmembrane proteins (SsuC) and a solute-binding protein (SsuA).

It is found in the cell inner membrane. It catalyses the reaction ATP + H2O + aliphatic sulfonate-[sulfonate-binding protein]Side 1 = ADP + phosphate + aliphatic sulfonateSide 2 + [sulfonate-binding protein]Side 1.. In terms of biological role, part of the ABC transporter complex SsuABC involved in aliphatic sulfonates import. Responsible for energy coupling to the transport system. The protein is Aliphatic sulfonates import ATP-binding protein SsuB of Pseudomonas fluorescens (strain Pf0-1).